The primary structure comprises 494 residues: Guanosine-5'-triphosphate,3'-diphosphate pyrophosphatase (494 aa).

The protein belongs to the GppA/Ppx family. GppA subfamily.

It carries out the reaction guanosine 3'-diphosphate 5'-triphosphate + H2O = guanosine 3',5'-bis(diphosphate) + phosphate + H(+). It participates in purine metabolism; ppGpp biosynthesis; ppGpp from GTP: step 2/2. Catalyzes the conversion of pppGpp to ppGpp. Guanosine pentaphosphate (pppGpp) is a cytoplasmic signaling molecule which together with ppGpp controls the 'stringent response', an adaptive process that allows bacteria to respond to amino acid starvation, resulting in the coordinated regulation of numerous cellular activities. This Escherichia fergusonii (strain ATCC 35469 / DSM 13698 / CCUG 18766 / IAM 14443 / JCM 21226 / LMG 7866 / NBRC 102419 / NCTC 12128 / CDC 0568-73) protein is Guanosine-5'-triphosphate,3'-diphosphate pyrophosphatase.